Here is an 806-residue protein sequence, read N- to C-terminus: Protein translocase subunit SecA 2 (806 aa).

Residues Q122, 140-144 (GEGKT), and D533 contribute to the ATP site.

Belongs to the SecA family. Monomer and homodimer. Part of the essential Sec protein translocation apparatus which comprises SecA, SecYEG and auxiliary proteins SecDF. Other proteins may also be involved.

It is found in the cell membrane. It localises to the cytoplasm. The catalysed reaction is ATP + H2O + cellular proteinSide 1 = ADP + phosphate + cellular proteinSide 2.. Part of the Sec protein translocase complex. Interacts with the SecYEG preprotein conducting channel. Has a central role in coupling the hydrolysis of ATP to the transfer of proteins into and across the cell membrane, serving as an ATP-driven molecular motor driving the stepwise translocation of polypeptide chains across the membrane. This chain is Protein translocase subunit SecA 2, found in Mycobacterium ulcerans (strain Agy99).